A 447-amino-acid polypeptide reads, in one-letter code: Retinoic acid receptor alpha (447 aa).

The tract at residues 1 to 79 is modulating; it reads MAGKGNPVPG…PPPPPRVYKP (79 aa). The segment covering 47–61 has biased composition (polar residues); it reads TPSPATIETQSTSSE. A disordered region spans residues 47–72; sequence TPSPATIETQSTSSEEIVPSPPSPPP. 2 consecutive NR C4-type zinc fingers follow at residues 80 to 100 and 116 to 140; these read CFVCQDKSSGYHYGVSACEGC and CHREKNCIINKVTRNRCQYCRLQKC. The nuclear receptor DNA-binding region spans 80-145; the sequence is CFVCQDKSSG…RLQKCLEVGM (66 aa). The segment at 146–174 is hinge; the sequence is SKESVRNDRNKKKKDEKKPECIENYVLSP. The region spanning 175–409 is the NR LBD domain; the sequence is DTEQMINRVR…PLIQEMLENS (235 aa). The 9aaTAD signature appears at 400–408; that stretch reads PLIQEMLEN. The segment at 407–447 is disordered; sequence ENSEGLESGATGSRPSGAPPGSCSPSLSPSSAQSSPPTQSP. Over residues 414 to 447 the composition is skewed to low complexity; it reads SGATGSRPSGAPPGSCSPSLSPSSAQSSPPTQSP.

It belongs to the nuclear hormone receptor family. NR1 subfamily. Heterodimer; with an rxr molecule. Binds DNA preferentially as a rar/rxr heterodimer.

Its subcellular location is the nucleus. In terms of biological role, receptor for retinoic acid. Retinoic acid receptors bind as heterodimers to their target response elements in response to their ligands, all-trans or 9-cis retinoic acid, and regulate gene expression in various biological processes. The rar/rxr heterodimers bind to the retinoic acid response elements (RARE) composed of tandem 5'-AGGTCA-3' sites known as DR1-DR5. The polypeptide is Retinoic acid receptor alpha (rara) (Takifugu rubripes (Japanese pufferfish)).